Consider the following 80-residue polypeptide: MKKDIHPNYQETTISCACGAVYTTKSTKPSIRIGICASCHPLFTGQQKFVDTAGRVEKFARRFGKISFIGESSNKKKKTK.

Positions 16, 18, 36, and 39 each coordinate Zn(2+).

The protein belongs to the bacterial ribosomal protein bL31 family. Type A subfamily. In terms of assembly, part of the 50S ribosomal subunit. Zn(2+) serves as cofactor.

Its function is as follows. Binds the 23S rRNA. The polypeptide is Large ribosomal subunit protein bL31 (Methylacidiphilum infernorum (isolate V4) (Methylokorus infernorum (strain V4))).